The primary structure comprises 159 residues: Putative polyketide cyclase (159 aa).

The protein to polyketide cyclases.

In terms of biological role, involved in developmentally regulated synthesis of a compound biosynthetically related to polyketide antibiotics which is essential for spore color in Streptomyces coelicolor. In Streptomyces coelicolor (strain ATCC BAA-471 / A3(2) / M145), this protein is Putative polyketide cyclase.